Consider the following 49-residue polypeptide: MRNKAKGFPNQVNHKFEGEPGATDAYASKRPNGETNTRPQERMRASGKR.

The tract at residues Met-1 to Arg-49 is disordered. Over residues Pro-39–Arg-49 the composition is skewed to basic and acidic residues.

It belongs to the SspK family.

It is found in the spore core. The chain is Small, acid-soluble spore protein K from Bacillus pumilus (strain SAFR-032).